A 535-amino-acid chain; its full sequence is Ribonuclease Y (535 aa).

A helical membrane pass occupies residues Ile-30–Ile-50. One can recognise a KH domain in the interval Thr-225–Leu-285. The region spanning Val-351 to Gly-444 is the HD domain.

This sequence belongs to the RNase Y family.

It is found in the cell membrane. Endoribonuclease that initiates mRNA decay. In Roseiflexus sp. (strain RS-1), this protein is Ribonuclease Y.